The following is a 297-amino-acid chain: 4-hydroxy-tetrahydrodipicolinate synthase (297 aa).

A pyruvate-binding site is contributed by threonine 47. Residue tyrosine 136 is the Proton donor/acceptor of the active site. The active-site Schiff-base intermediate with substrate is lysine 165. Isoleucine 206 contacts pyruvate.

Belongs to the DapA family. As to quaternary structure, homotetramer; dimer of dimers.

Its subcellular location is the cytoplasm. It catalyses the reaction L-aspartate 4-semialdehyde + pyruvate = (2S,4S)-4-hydroxy-2,3,4,5-tetrahydrodipicolinate + H2O + H(+). It participates in amino-acid biosynthesis; L-lysine biosynthesis via DAP pathway; (S)-tetrahydrodipicolinate from L-aspartate: step 3/4. Catalyzes the condensation of (S)-aspartate-beta-semialdehyde [(S)-ASA] and pyruvate to 4-hydroxy-tetrahydrodipicolinate (HTPA). The sequence is that of 4-hydroxy-tetrahydrodipicolinate synthase from Campylobacter fetus subsp. fetus (strain 82-40).